The primary structure comprises 429 residues: Adenylosuccinate synthetase (429 aa).

Residues 12–18 and 40–42 each bind GTP; these read GDEGKGK and GHT. Asp13 acts as the Proton acceptor in catalysis. Positions 13 and 40 each coordinate Mg(2+). IMP contacts are provided by residues 13–16, 38–41, Thr129, Arg143, Gln223, Thr238, and Arg302; these read DEGK and NAGH. Catalysis depends on His41, which acts as the Proton donor. A substrate-binding site is contributed by 298 to 304; the sequence is VVTGRKR. GTP-binding positions include Arg304, 330-332, and 412-414; these read KLD and STS.

It belongs to the adenylosuccinate synthetase family. Homodimer. The cofactor is Mg(2+).

It is found in the cytoplasm. It catalyses the reaction IMP + L-aspartate + GTP = N(6)-(1,2-dicarboxyethyl)-AMP + GDP + phosphate + 2 H(+). Its pathway is purine metabolism; AMP biosynthesis via de novo pathway; AMP from IMP: step 1/2. In terms of biological role, plays an important role in the de novo pathway of purine nucleotide biosynthesis. Catalyzes the first committed step in the biosynthesis of AMP from IMP. The chain is Adenylosuccinate synthetase from Bartonella tribocorum (strain CIP 105476 / IBS 506).